The primary structure comprises 61 residues: Large ribosomal subunit protein eL37 (61 aa).

The Zn(2+) site is built by Cys20, Cys23, Cys35, and Cys38. A C4-type zinc finger spans residues 20–38 (CRRCGRRAYHVRKKRCAAC).

It belongs to the eukaryotic ribosomal protein eL37 family. Requires Zn(2+) as cofactor.

In terms of biological role, binds to the 23S rRNA. In Methanocaldococcus jannaschii (strain ATCC 43067 / DSM 2661 / JAL-1 / JCM 10045 / NBRC 100440) (Methanococcus jannaschii), this protein is Large ribosomal subunit protein eL37 (rpl37e).